The sequence spans 192 residues: Virion infectivity factor (192 aa).

The interaction with host APOBEC3F; F1-box stretch occupies residues 14-17; the sequence is DRMR. An interaction with host APOBEC3G; G-box region spans residues 40–44; the sequence is YRHHY. Positions 54–72 are interaction with host APOBEC3F and APOBEC3G; FG-box; it reads EVHIPLGEARLVVTTYWGL. The interval 74–79 is interaction with host APOBEC3F; F2-box; it reads TGEKEW. The tract at residues 75–114 is RNA-binding; it reads GEKEWHLGQGVSIEWRKRRYSTQVDPGLADQLIHMYYFDC. A Phosphothreonine; by host MAP4K1 modification is found at T96. Residues H108, C114, C133, and H139 each contribute to the Zn(2+) site. The short motif at 108-139 is the HCCH motif element; sequence HMYYFDCFAESAIRKAILGHIVSPSCEYQAGH. Phosphoserine; by host is present on S144. Positions 144–153 match the BC-box-like motif motif; the sequence is SLQYLALAAL. Positions 151 to 164 are multimerization; the sequence is AALIAPKKIKPPLP. The segment at 151-180 is SOCS box-like; it reads AALIAPKKIKPPLPSVRKLTEDRWNKPQKT. S165 carries the phosphoserine; by host MAP4K1 modification. Residues 165–192 form a disordered region; sequence SVRKLTEDRWNKPQKTKGRRGSHTMNGH. Residues 171–172 are membrane association; that stretch reads ED. The segment covering 176 to 186 has biased composition (basic residues); that stretch reads KPQKTKGRRGS. At T188 the chain carries Phosphothreonine; by host.

Belongs to the primate lentivirus group Vif protein family. As to quaternary structure, homomultimer; in vitro and presumably in vivo. Interacts with viral RNA and Pr55Gag precursor; these interactions mediate Vif incorporation into the virion. Interacts with the viral reverse transcriptase. Forms cullin-5-RING E3 ubiquitin-protein ligase complex (ECS complex) by interacting with host CUL5, RBX2, elongin BC complex (ELOB and ELOC) and CBFB/CBF-beta. Within the ECS complex, Vif interacts directly with host CUL5, ELOC and APOBEC (APOBEC3F and APOBEC3G) substrates. The ECS complex also contains some single-stranded RNA (ssRNA) that acts as a glue that bridges Vif with APOBEC (APOBEC3F and APOBEC3G) substrates. Interacts with host UBCE7IP1 isoform 3/ZIN and possibly with SAT. Interacts with host tyrosine kinases HCK and FYN; these interactions may decrease level of phosphorylated APOBEC3G incorporation into virions. Interacts with host ABCE1; this interaction may play a role in protecting viral RNA from damage during viral assembly. Interacts with host MDM2; this interaction targets Vif for degradation by the proteasome. In terms of processing, processed in virion by the viral protease. Highly phosphorylated on serine and threonine residues. Post-translationally, polyubiquitinated and degraded by the proteasome in the presence of APOBEC3G.

The protein localises to the host cytoplasm. Its subcellular location is the host cell membrane. It is found in the virion. Counteracts the innate antiviral activity of host APOBEC3F and APOBEC3G by promoting their ubiquitination and degradation. Acts as a substrate recognition component of an E3 ubiquitin-protein ligase complex: mechanistically, Vif hijacks a host cullin-5-RING E3 ubiquitin-protein ligase complex (ECS complex) and the transcription coactivator CBFB/CBF-beta to form an active E3 ubiquitin-protein ligase complex that targets APOBEC3G and APOBEC3F for polyubiquitination, leading to their degradation by the proteasome. Vif interaction with APOBEC3G also blocks its cytidine deaminase activity in a proteasome-independent manner, suggesting a dual inhibitory mechanism. May interact directly with APOBEC3G mRNA in order to inhibit its translation. Association with CBFB/CBF-beta also inhibits the transcription coactivator activity of CBFB/CBF-beta. Seems to play a role in viral morphology by affecting the stability of the viral nucleoprotein core. Finally, Vif also contributes to the G2 cell cycle arrest observed in HIV infected cells. The chain is Virion infectivity factor from Human immunodeficiency virus type 1 group M subtype D (isolate NDK) (HIV-1).